We begin with the raw amino-acid sequence, 156 residues long: Ribonuclease pancreatic (156 aa).

An N-terminal signal peptide occupies residues methionine 1–glycine 28. Residues alanine 33–serine 43 show a composition bias toward basic and acidic residues. The disordered stretch occupies residues alanine 33–tyrosine 53. Substrate is bound by residues lysine 35 and arginine 38. The active-site Proton acceptor is histidine 40. 4 disulfide bridges follow: cysteine 54-cysteine 112, cysteine 68-cysteine 123, cysteine 86-cysteine 138, and cysteine 93-cysteine 100. N-linked (GlcNAc...) asparagine; partial glycosylation is present at asparagine 62. Residues lysine 69–threonine 73 and lysine 94 contribute to the substrate site. A glycan (N-linked (GlcNAc...) asparagine) is linked at asparagine 104. A substrate-binding site is contributed by arginine 113. N-linked (GlcNAc...) asparagine glycosylation is present at asparagine 116. Histidine 147 acts as the Proton donor in catalysis.

This sequence belongs to the pancreatic ribonuclease family. As to quaternary structure, monomer. Interacts with and forms tight 1:1 complexes with RNH1. Dimerization of two such complexes may occur. Interaction with RNH1 inhibits this protein. Post-translationally, N-linked glycans are of complex type. In terms of tissue distribution, pancreas and other tissues and body fluids (indicating it may have other physiological functions besides its role in digestion).

It localises to the secreted. The catalysed reaction is an [RNA] containing cytidine + H2O = an [RNA]-3'-cytidine-3'-phosphate + a 5'-hydroxy-ribonucleotide-3'-[RNA].. The enzyme catalyses an [RNA] containing uridine + H2O = an [RNA]-3'-uridine-3'-phosphate + a 5'-hydroxy-ribonucleotide-3'-[RNA].. Functionally, endonuclease that catalyzes the cleavage of RNA on the 3' side of pyrimidine nucleotides. Acts on single-stranded and double-stranded RNA. The chain is Ribonuclease pancreatic (RNASE1) from Homo sapiens (Human).